Here is a 185-residue protein sequence, read N- to C-terminus: Large ribosomal subunit protein uL5 (185 aa).

This sequence belongs to the universal ribosomal protein uL5 family. In terms of assembly, part of the 50S ribosomal subunit; part of the 5S rRNA/L5/L18/L25 subcomplex. Contacts the 5S rRNA and the P site tRNA. Forms a bridge to the 30S subunit in the 70S ribosome.

In terms of biological role, this is one of the proteins that bind and probably mediate the attachment of the 5S RNA into the large ribosomal subunit, where it forms part of the central protuberance. In the 70S ribosome it contacts protein S13 of the 30S subunit (bridge B1b), connecting the 2 subunits; this bridge is implicated in subunit movement. Contacts the P site tRNA; the 5S rRNA and some of its associated proteins might help stabilize positioning of ribosome-bound tRNAs. This Magnetococcus marinus (strain ATCC BAA-1437 / JCM 17883 / MC-1) protein is Large ribosomal subunit protein uL5.